Reading from the N-terminus, the 168-residue chain is Alkyl hydroperoxide reductase C (168 aa).

The Thioredoxin domain occupies 1–138 (EFIEVSEESF…LVNKIKAAQY (138 aa)). The Cysteine sulfenic acid (-SOH) intermediate role is filled by cysteine 28.

This sequence belongs to the peroxiredoxin family. AhpC/Prx1 subfamily. As to quaternary structure, homodimer; disulfide-linked, upon oxidation. 5 homodimers assemble to form a ring-like decamer.

Its subcellular location is the cytoplasm. The catalysed reaction is a hydroperoxide + NADH + H(+) = an alcohol + NAD(+) + H2O. Its function is as follows. Thiol-specific peroxidase that catalyzes the reduction of hydrogen peroxide and organic hydroperoxides to water and alcohols, respectively. Plays a role in cell protection against oxidative stress by detoxifying peroxides. The chain is Alkyl hydroperoxide reductase C from Ferdinandcohnia aciditolerans (strain JCM 32973 / CCTCC AB 2017280 / YN-1) (Bacillus aciditolerans).